Reading from the N-terminus, the 198-residue chain is MSSPYILVLYYSRHGATAEMARQIARGVEQGGFEARVRTVPAVSTECEAVAPDIPAEGALYATLEDLKNCAGLALGSPTRFGNMASPLKYFLDGTSSLWLTGSLVGKPAAVFTSTASLHGGQETTQLSMLLPLLHHGMLVLGIPYSEPALLETRGGGTPYGASHFAGADGKRSLDEHELTLCRALGKRLAETAGKLGS.

The Flavodoxin-like domain occupies 6–190; that stretch reads ILVLYYSRHG…LCRALGKRLA (185 aa). Residues 12-17, 79-81, 114-120, and His-135 each bind FMN; these read SRHGAT, TRF, and STASLHG.

This sequence belongs to the WrbA family. Homodimer. FMN serves as cofactor.

The enzyme catalyses a quinone + NADH + H(+) = a quinol + NAD(+). It carries out the reaction a quinone + NADPH + H(+) = a quinol + NADP(+). The polypeptide is NAD(P)H dehydrogenase (quinone) (Pseudomonas aeruginosa (strain ATCC 15692 / DSM 22644 / CIP 104116 / JCM 14847 / LMG 12228 / 1C / PRS 101 / PAO1)).